A 156-amino-acid chain; its full sequence is Small ribosomal subunit protein uS7 (156 aa).

The protein belongs to the universal ribosomal protein uS7 family. As to quaternary structure, part of the 30S ribosomal subunit. Contacts proteins S9 and S11.

In terms of biological role, one of the primary rRNA binding proteins, it binds directly to 16S rRNA where it nucleates assembly of the head domain of the 30S subunit. Is located at the subunit interface close to the decoding center, probably blocks exit of the E-site tRNA. The sequence is that of Small ribosomal subunit protein uS7 from Nitrosospira multiformis (strain ATCC 25196 / NCIMB 11849 / C 71).